Here is a 719-residue protein sequence, read N- to C-terminus: Nucleolar complex protein 2 homolog (719 aa).

Positions 1 to 24 (MKLLKKSSSLKKGVTKRAKLQKKP) are enriched in basic residues. 3 disordered regions span residues 1–67 (MKLL…GMKK), 86–136 (LQQE…TKIK), and 643–719 (ALEN…SDED). Over residues 25 to 42 (PSKDEASSSDEELAKLDG) the composition is skewed to basic and acidic residues. Over residues 89-130 (EDADLLNMEEDEDDDEEGEDNEDEEDEEEEEESDEDDDEEDD) the composition is skewed to acidic residues. A compositionally biased stretch (basic and acidic residues) spans 643–661 (ALENSKKDDKKKKKEEEAA).

The protein belongs to the NOC2 family.

The protein localises to the nucleus. Its function is as follows. Required for normal somatic gonad development and for regulation of germline development and proliferation. This Caenorhabditis briggsae protein is Nucleolar complex protein 2 homolog (pro-2).